We begin with the raw amino-acid sequence, 724 residues long: Eukaryotic elongation factor 2 kinase (724 aa).

Ala2 is modified (N-acetylalanine). Residues 11-35 (EGVDGGGSSGAGRHGDSDTDSDDDE) are disordered. Positions 13-22 (VDGGGSSGAG) are enriched in gly residues. Phosphoserine is present on residues Ser18, Ser27, Ser70, and Ser73. Ser77 carries the phosphoserine; by autocatalysis and TRPM7 modification. The interval 80-93 (FKEAWKHAIEKAKH) is calmodulin-binding. The Alpha-type protein kinase domain maps to 115-325 (RYNAVTGEWL…ICQSMGLAPF (211 aa)). At Ser242 the chain carries Phosphoserine. ATP is bound at residue 295–301 (GDGNLGV). Position 347 is a phosphothreonine (Thr347). Position 352 is a phosphothreonine; by autocatalysis (Thr352). A disordered region spans residues 353-476 (EEKCGSPRIR…PESDEDSLGS (124 aa)). Ser358 bears the Phosphoserine; by MAPK13 and CDK1 mark. The span at 364-376 (LSGSRPPLLLRLS) shows a compositional bias: low complexity. Phosphoserine occurs at positions 365 and 391. The span at 385-403 (SDVTFDSLPSSPSSATPHS) shows a compositional bias: polar residues. Residue Ser397 is modified to Phosphoserine; by AMPK. Basic and acidic residues-rich tracts occupy residues 421 to 435 (GPRD…RDSE) and 444 to 468 (SEKR…RRPE). A phosphoserine mark is found at Ser434, Ser444, Ser469, Ser473, and Ser476. Residue Ser499 is modified to Phosphoserine; by PKA.

The protein belongs to the protein kinase superfamily. Alpha-type protein kinase family. As to quaternary structure, monomer or homodimer. Interacts with Calmodulin/CALM1; this interaction is strictly required for phosphorylation activity. In terms of processing, the N-terminus is blocked. Post-translationally, autophosphorylated at multiple residues, Thr-347 being the major site. Phosphorylated by AMP-activated protein kinase AMPK at Ser-397 leading to EEF2K activation and protein synthesis inhibition. Phosphorylated by TRPM7 at Ser-77 resulting in improved protein stability, higher EE2F phosphorylated and subsequently reduced rate of protein synthesis. Phosphorylation by other kinases such as CDK1 and MAPK13 at Ser-358 or RPS6KA1 and RPS6KB1 at Ser-365 instead decrease EEF2K activity and promote protein synthesis. Widely expressed, with high levels in reticulocytes and skeletal muscle.

The enzyme catalyses [translation elongation factor 2] + ATP = [translation elongation factor 2]-phosphate + ADP + H(+). With respect to regulation, undergoes calcium/calmodulin-dependent intramolecular autophosphorylation, and this results in it becoming partially calcium/calmodulin-independent. Its function is as follows. Threonine kinase that regulates protein synthesis by controlling the rate of peptide chain elongation. Upon activation by a variety of upstream kinases including AMPK or TRPM7, phosphorylates the elongation factor EEF2 at a single site, renders it unable to bind ribosomes and thus inactive. In turn, the rate of protein synthesis is reduced. The protein is Eukaryotic elongation factor 2 kinase of Rattus norvegicus (Rat).